Reading from the N-terminus, the 349-residue chain is Ion-translocating oxidoreductase complex subunit D (349 aa).

Transmembrane regions (helical) follow at residues A37 to A57, L73 to P90, and A124 to A144. T185 carries the post-translational modification FMN phosphoryl threonine. Transmembrane regions (helical) follow at residues A212–L232, W239–L259, G265–T285, A291–I311, and G315–I335.

It belongs to the NqrB/RnfD family. In terms of assembly, the complex is composed of six subunits: RnfA, RnfB, RnfC, RnfD, RnfE and RnfG. Requires FMN as cofactor.

Its subcellular location is the cell inner membrane. In terms of biological role, part of a membrane-bound complex that couples electron transfer with translocation of ions across the membrane. In Shewanella sp. (strain W3-18-1), this protein is Ion-translocating oxidoreductase complex subunit D.